A 376-amino-acid polypeptide reads, in one-letter code: Chaperone protein DnaJ (376 aa).

The J domain maps to 5–70 (DYYEVLGVAK…QKRAAYDQYG (66 aa)). The CR-type zinc finger occupies 136-214 (GYDTQIRVPS…CHGSGKVKET (79 aa)). 8 residues coordinate Zn(2+): cysteine 149, cysteine 152, cysteine 166, cysteine 169, cysteine 188, cysteine 191, cysteine 202, and cysteine 205. CXXCXGXG motif repeat units lie at residues 149-156 (CGVCHGSG), 166-173 (CPTCHGQG), 188-195 (CPKCHGTG), and 202-209 (CAHCHGSG).

This sequence belongs to the DnaJ family. In terms of assembly, homodimer. Zn(2+) serves as cofactor.

It is found in the cytoplasm. Participates actively in the response to hyperosmotic and heat shock by preventing the aggregation of stress-denatured proteins and by disaggregating proteins, also in an autonomous, DnaK-independent fashion. Unfolded proteins bind initially to DnaJ; upon interaction with the DnaJ-bound protein, DnaK hydrolyzes its bound ATP, resulting in the formation of a stable complex. GrpE releases ADP from DnaK; ATP binding to DnaK triggers the release of the substrate protein, thus completing the reaction cycle. Several rounds of ATP-dependent interactions between DnaJ, DnaK and GrpE are required for fully efficient folding. Also involved, together with DnaK and GrpE, in the DNA replication of plasmids through activation of initiation proteins. This Burkholderia mallei (strain NCTC 10229) protein is Chaperone protein DnaJ.